The primary structure comprises 292 residues: Elongation factor Ts (292 aa).

Positions 82–85 are involved in Mg(2+) ion dislocation from EF-Tu; it reads TDFV.

It belongs to the EF-Ts family.

Its subcellular location is the cytoplasm. In terms of biological role, associates with the EF-Tu.GDP complex and induces the exchange of GDP to GTP. It remains bound to the aminoacyl-tRNA.EF-Tu.GTP complex up to the GTP hydrolysis stage on the ribosome. This is Elongation factor Ts from Bordetella avium (strain 197N).